Reading from the N-terminus, the 502-residue chain is Type-2 serine--tRNA ligase (502 aa).

Ala-304 provides a ligand contact to L-serine. Cys-306 is a Zn(2+) binding site. Arg-336 lines the L-serine pocket. Residues 336–338 and 347–348 each bind ATP; these read RYE and RV. Residues 353-355 and Gln-400 each bind L-serine; that span reads RVE. Glu-355 serves as a coordination point for Zn(2+). Glu-432 provides a ligand contact to ATP. Position 435 (Asn-435) interacts with L-serine. Residue Cys-461 coordinates Zn(2+). ATP is bound at residue Arg-468.

This sequence belongs to the class-II aminoacyl-tRNA synthetase family. Type-2 seryl-tRNA synthetase subfamily. In terms of assembly, homodimer. Zn(2+) serves as cofactor.

It localises to the cytoplasm. It carries out the reaction tRNA(Ser) + L-serine + ATP = L-seryl-tRNA(Ser) + AMP + diphosphate + H(+). The catalysed reaction is tRNA(Sec) + L-serine + ATP = L-seryl-tRNA(Sec) + AMP + diphosphate + H(+). The protein operates within aminoacyl-tRNA biosynthesis; selenocysteinyl-tRNA(Sec) biosynthesis; L-seryl-tRNA(Sec) from L-serine and tRNA(Sec): step 1/1. Catalyzes the attachment of serine to tRNA(Ser). Is also able to aminoacylate tRNA(Sec) with serine, to form the misacylated tRNA L-seryl-tRNA(Sec), which will be further converted into selenocysteinyl-tRNA(Sec). The sequence is that of Type-2 serine--tRNA ligase from Methanococcoides burtonii (strain DSM 6242 / NBRC 107633 / OCM 468 / ACE-M).